A 108-amino-acid chain; its full sequence is Iron-sulfur cluster assembly protein CyaY (108 aa).

The protein belongs to the frataxin family.

Involved in iron-sulfur (Fe-S) cluster assembly. May act as a regulator of Fe-S biogenesis. The sequence is that of Iron-sulfur cluster assembly protein CyaY from Burkholderia orbicola (strain MC0-3).